The sequence spans 1142 residues: Zinc finger MYM-type protein 1 (1142 aa).

Lys25 participates in a covalent cross-link: Glycyl lysine isopeptide (Lys-Gly) (interchain with G-Cter in SUMO2). 3 consecutive MYM-type zinc fingers follow at residues 110 to 148 (QLFC…PKDV), 160 to 203 (KTFC…QYEV), and 210 to 245 (HNLC…SSSL). A Glycyl lysine isopeptide (Lys-Gly) (interchain with G-Cter in SUMO2) cross-link involves residue Lys284. An MYM-type 4 zinc finger spans residues 300-331 (ELFCSINCFSAYSKAKMESSSVSVVSVVHDTS). Residues 385–396 (KSSPSEPSNAVA) show a composition bias toward polar residues. Residues 385–413 (KSSPSEPSNAVASSSTEQPSVSPSSSVFS) are disordered. A compositionally biased stretch (low complexity) spans 397 to 413 (SSSTEQPSVSPSSSVFS). The TTF-type zinc-finger motif lies at 452–538 (KSRSIKKSCC…YQFCDGAVSD (87 aa)).

The protein localises to the nucleus. This is Zinc finger MYM-type protein 1 (ZMYM1) from Homo sapiens (Human).